The chain runs to 1081 residues: DNA-directed RNA polymerase subunit beta (1081 aa).

The protein belongs to the RNA polymerase beta chain family. In plastids the minimal PEP RNA polymerase catalytic core is composed of four subunits: alpha, beta, beta', and beta''. When a (nuclear-encoded) sigma factor is associated with the core the holoenzyme is formed, which can initiate transcription.

Its subcellular location is the plastid. The protein resides in the chloroplast. It carries out the reaction RNA(n) + a ribonucleoside 5'-triphosphate = RNA(n+1) + diphosphate. DNA-dependent RNA polymerase catalyzes the transcription of DNA into RNA using the four ribonucleoside triphosphates as substrates. This Cyanidium caldarium (Red alga) protein is DNA-directed RNA polymerase subunit beta.